The sequence spans 495 residues: Polybrominated aromatic compounds synthase (495 aa).

Cys437 is a binding site for heme.

It belongs to the cytochrome P450 family. The cofactor is heme.

In terms of biological role, cytochrome P450 protein involved in the biosynthesis of polybrominated aromatic organic compounds. In the presence of ferredoxin, ferredoxin reductase and NADH, catalyzes the coupling of bromophenols and bromopyrroles, forming various polybrominated biphenyls and hydroxylated polybrominated diphenyl ethers (OH-BDE). Can also mediate the heterocoupling of 3,5-dibromocatechol, forming six different compounds, including polybrominated dibenzo-p-dioxins, which are among the most toxic molecules known to man. This is Polybrominated aromatic compounds synthase from Marinomonas mediterranea (strain ATCC 700492 / JCM 21426 / NBRC 103028 / MMB-1).